A 359-amino-acid chain; its full sequence is Palmitoyltransferase ERF2 (359 aa).

The tract at residues 1 to 21 is disordered; it reads MALVSRRSTRSESTSITKEEH. At 1 to 75 the chain is on the cytoplasmic side; it reads MALVSRRSTR…RFRTVKGAKP (75 aa). A helical membrane pass occupies residues 76–96; the sequence is LWLGVLLAIVCPMVLFSIFEA. The Lumenal segment spans residues 97-104; sequence HKLWHTQN. A helical membrane pass occupies residues 105–125; the sequence is GYKVLVIFFYYFWVITLASFI. Over 126 to 217 the chain is Cytoplasmic; it reads RTATSDPGVL…NCIGKRNYRF (92 aa). Positions 173-223 constitute a DHHC domain; it reads KYCPSCRIWRPPRSSHCSTCNVCVMVHDHHCIWVNNCIGKRNYRFFLIFLL. Residue C203 is the S-palmitoyl cysteine intermediate of the active site. A helical membrane pass occupies residues 218–238; sequence FLIFLLGAILSSVILLTNCAI. At 239–250 the chain is on the lumenal side; sequence HIARESGGPRDC. Residues 251-271 form a helical membrane-spanning segment; sequence PVAILLLCYAGLTLWYPAILF. Residues 272–359 are Cytoplasmic-facing; that stretch reads TYHIFMAGNQ…AHSFEKIQKI (88 aa).

It belongs to the DHHC palmitoyltransferase family. ERF2/ZDHHC9 subfamily. In terms of assembly, interacts with SHR5. Post-translationally, autopalmitoylated.

It is found in the endoplasmic reticulum membrane. The enzyme catalyses L-cysteinyl-[protein] + hexadecanoyl-CoA = S-hexadecanoyl-L-cysteinyl-[protein] + CoA. The ERF2-SHR5 complex is a palmitoyltransferase specific for Ras proteins. Palmitoylates RAS2, which is required for its proper plasma membrane localization. The chain is Palmitoyltransferase ERF2 (ERF2) from Saccharomyces cerevisiae (strain ATCC 204508 / S288c) (Baker's yeast).